The primary structure comprises 617 residues: Vacuolar protein sorting-associated protein 33B (617 aa).

It belongs to the STXBP/unc-18/SEC1 family. Interacts with vipas39. Widely expressed from 4 hours post-fertilization (hpf) to 24 hpf. At 48 hpf, localized to brain, retina, ear, liver and proximal intestine. This expression pattern is more pronounced at 72 hpf and persists through 5 days post-fertilization (dpf). At 3 dpf and 4 dpf, expression in the liver is predominantly in developing biliary epithelial cells. No expression detected in kidney or spinal cord.

It is found in the late endosome membrane. The protein resides in the lysosome membrane. In terms of biological role, may play a role in vesicle-mediated protein trafficking to lysosomal compartments and in membrane docking/fusion reactions of late endosomes/lysosomes. Required for proper trafficking and targeting of the collagen-modifying enzyme lysyl hydroxylase 3 (LH3) to intracellular collagen. Mediates phagolysosomal fusion in macrophages. Proposed to be involved in endosomal maturation implicating vipas39. In epithelial cells, the vps33b:vipas39 complex may play a role in the apical recycling pathway and in the maintenance of the apical-basolateral polarity. Plays a role in bile duct development. The sequence is that of Vacuolar protein sorting-associated protein 33B from Danio rerio (Zebrafish).